The following is a 328-amino-acid chain: Transcription factor bHLH25 (328 aa).

The segment at 125-152 (PHQKSDEFNRKGTKRAQPFSRNQSNAQD) is disordered. Positions 148–197 (SNAQDHIIAERKRREKLTQRFVALSALVPGLKKMDKASVLGDALKHIKYL) constitute a bHLH domain.

As to quaternary structure, homodimer. Expressed in flowers.

It is found in the nucleus. This is Transcription factor bHLH25 (BHLH25) from Arabidopsis thaliana (Mouse-ear cress).